Here is a 386-residue protein sequence, read N- to C-terminus: Probable mannan endo-1,4-beta-mannosidase A (386 aa).

A signal peptide spans 1–21 (MKLNPSLLTAAGLVSAQLASA). Substrate-binding residues include W95 and N207. E208 acts as the Proton donor in catalysis. Residue Y283 participates in substrate binding. The active-site Nucleophile is the E316. Residue N336 is glycosylated (N-linked (GlcNAc...) asparagine). Residue W346 coordinates substrate.

The protein belongs to the glycosyl hydrolase 5 (cellulase A) family.

The protein localises to the secreted. It carries out the reaction Random hydrolysis of (1-&gt;4)-beta-D-mannosidic linkages in mannans, galactomannans and glucomannans.. Endo-1,4-mannanase, a crucial enzyme for depolymerization of seed galactomannans and wood galactoglucomannans. The sequence is that of Probable mannan endo-1,4-beta-mannosidase A (manA) from Aspergillus flavus (strain ATCC 200026 / FGSC A1120 / IAM 13836 / NRRL 3357 / JCM 12722 / SRRC 167).